A 228-amino-acid polypeptide reads, in one-letter code: Prolactin (228 aa).

The signal sequence occupies residues 1-29; that stretch reads MCTKRSSLKGSLLLLLLISSLLLSRSVDS. A disulfide bridge connects residues Cys-33 and Cys-40. Phosphoserine is present on residues Ser-55, Ser-63, and Ser-119. 2 cysteine pairs are disulfide-bonded: Cys-87–Cys-203 and Cys-220–Cys-228.

It belongs to the somatotropin/prolactin family. In terms of assembly, interacts with PRLR.

It localises to the secreted. Prolactin acts primarily on the mammary gland by promoting lactation. This Isoodon macrourus (Short-nosed bandicoot) protein is Prolactin (PRL).